The sequence spans 321 residues: Digestive cysteine proteinase 3 (321 aa).

The first 16 residues, 1-16, serve as a signal peptide directing secretion; it reads MKVAALFLCGLALATA. The propeptide at 17-106 is activation peptide; the sequence is SPSWDHFKTQ…AVFTAEAGPM (90 aa). 3 cysteine pairs are disulfide-bonded: Cys127/Cys170, Cys161/Cys203, and Cys261/Cys310. Cys130 is an active-site residue. Residues His268 and Asn288 contribute to the active site.

It belongs to the peptidase C1 family.

Inhibited by E-64, antipain, leupeptin, heavy metal ions, iodoacetic acid, dithionitrobenzene, p-hydroxymercuri-benzoate; activated by mercaptoethanol and dithiothreitol. This chain is Digestive cysteine proteinase 3 (LCP3), found in Homarus americanus (American lobster).